We begin with the raw amino-acid sequence, 359 residues long: MMNNNGNQVSNLSNALRQVNIGNRNSNTTTDQSNINFEFSAGVNNNNNNSSSSNNNNNNNNNAQNNNSGRNGSQSNDNGNNIKDTLEQHRQQQQAFSDMSHVEYSRITKFFQEQPLEGYTLFSHRSAPNGFKVAIVLSELGFHYNTIFLDFNLGEHRAPEFVSVNPNARVPALIDHGMDNLSIWESGAILLHLVNKYYKETGNPLLWSDDLADQSQINAWLFFQTSGHAPMIGQALHFRYFHSQKIASAVERYTDEVRRVYGVVEMALAERREALVMELDTENAAAYSAGTTPMSQSRFFDYPVWLVGDKLTIADLAFVPWNNVVDRIGINIKIEFPEVYKWTKHMMRRPAVIKALRGE.

A disordered region spans residues 39–82 (FSAGVNNNNNNSSSSNNNNNNNNNAQNNNSGRNGSQSNDNGNNI). Over residues 44 to 81 (NNNNNNSSSSNNNNNNNNNAQNNNSGRNGSQSNDNGNN) the composition is skewed to low complexity. A GST N-terminal domain is found at 117 to 201 (EGYTLFSHRS…HLVNKYYKET (85 aa)). The GST C-terminal domain maps to 210 to 359 (DLADQSQINA…PAVIKALRGE (150 aa)).

This sequence belongs to the GST superfamily. In terms of assembly, homodimer.

Functionally, plays an important role in the cellular response to the nitrogen source. URE2 gene plays a major part in the repression of GLN1 and GDH2 genes by glutamine, and is required for the inactivation of glutamine synthetase. URE2 gene product may catalytically inactivate GLN3 in response to an increase in the intracellular concentration of glutamine. The chain is Protein URE2 (URE2) from Saccharomyces paradoxus (Yeast).